The chain runs to 626 residues: Probable potassium transport system protein Kup 3 (626 aa).

12 helical membrane passes run 10-30 (LATL…TSPL), 51-71 (VLGI…LKYV), 107-127 (VLLG…TPAI), 141-161 (PAFK…LFIF), 173-193 (FGPV…AAIV), 216-236 (LLGF…EALY), 251-271 (WLGY…ALLL), 293-313 (LVAL…SGAF), 341-361 (IYLP…VIEF), 371-391 (YGIA…AVAV), 401-421 (AMLG…ANSV), and 423-443 (IADG…LLTT).

The protein belongs to the HAK/KUP transporter (TC 2.A.72) family.

It is found in the cell inner membrane. It catalyses the reaction K(+)(in) + H(+)(in) = K(+)(out) + H(+)(out). Its function is as follows. Transport of potassium into the cell. Likely operates as a K(+):H(+) symporter. The chain is Probable potassium transport system protein Kup 3 from Dechloromonas aromatica (strain RCB).